Reading from the N-terminus, the 182-residue chain is Segregation and condensation protein B (182 aa).

This sequence belongs to the ScpB family. Homodimer. Homodimerization may be required to stabilize the binding of ScpA to the Smc head domains. Component of a cohesin-like complex composed of ScpA, ScpB and the Smc homodimer, in which ScpA and ScpB bind to the head domain of Smc. The presence of the three proteins is required for the association of the complex with DNA.

It localises to the cytoplasm. Its function is as follows. Participates in chromosomal partition during cell division. May act via the formation of a condensin-like complex containing Smc and ScpA that pull DNA away from mid-cell into both cell halves. This is Segregation and condensation protein B from Staphylococcus saprophyticus subsp. saprophyticus (strain ATCC 15305 / DSM 20229 / NCIMB 8711 / NCTC 7292 / S-41).